A 329-amino-acid polypeptide reads, in one-letter code: DNA-directed RNA polymerase subunit alpha (329 aa).

The segment at 1–234 (MQGSVTEFLK…EQLDAFVELR (234 aa)) is alpha N-terminal domain (alpha-NTD). The interval 248 to 329 (FDPILLRPVD…WPPASLADDL (82 aa)) is alpha C-terminal domain (alpha-CTD).

This sequence belongs to the RNA polymerase alpha chain family. Homodimer. The RNAP catalytic core consists of 2 alpha, 1 beta, 1 beta' and 1 omega subunit. When a sigma factor is associated with the core the holoenzyme is formed, which can initiate transcription.

It catalyses the reaction RNA(n) + a ribonucleoside 5'-triphosphate = RNA(n+1) + diphosphate. In terms of biological role, DNA-dependent RNA polymerase catalyzes the transcription of DNA into RNA using the four ribonucleoside triphosphates as substrates. This is DNA-directed RNA polymerase subunit alpha from Shewanella amazonensis (strain ATCC BAA-1098 / SB2B).